The primary structure comprises 293 residues: Protein PET54 (293 aa).

It is found in the mitochondrion inner membrane. Activator of specific mitochondrial mRNAs. PET54 is involved in the excision of intron aI5-beta from pre-mRNA for cytochrome c oxidase I (COX1) and plays a role in promoting the translation of COX3. In Saccharomyces cerevisiae (strain ATCC 204508 / S288c) (Baker's yeast), this protein is Protein PET54 (PET54).